Consider the following 415-residue polypeptide: Actin-like protein 7B (415 aa).

Residues 1-35 (MATRNSPMALGTAQGDPGEAGTRPGSDAGLRDTGA) are disordered. S6 bears the Phosphoserine mark.

Belongs to the actin family.

It localises to the cytoplasm. Its subcellular location is the cytoskeleton. This Macaca fascicularis (Crab-eating macaque) protein is Actin-like protein 7B (ACTL7B).